The sequence spans 159 residues: Eukaryotic translation initiation factor 5A-1 (159 aa).

Positions Met-1 to Ala-12 are enriched in basic and acidic residues. The segment at Met-1–Gln-23 is disordered. A Hypusine modification is found at Lys-52.

The protein belongs to the eIF-5A family. Lys-52 undergoes hypusination, a unique post-translational modification that consists in the addition of a butylamino group from spermidine to lysine side chain, leading to the formation of the unusual amino acid hypusine. eIF-5As are the only known proteins to undergo this modification, which is essential for their function.

Its function is as follows. Translation factor that promotes translation elongation and termination, particularly upon ribosome stalling at specific amino acid sequence contexts. Binds between the exit (E) and peptidyl (P) site of the ribosome and promotes rescue of stalled ribosome: specifically required for efficient translation of polyproline-containing peptides as well as other motifs that stall the ribosome. Acts as a ribosome quality control (RQC) cofactor by joining the RQC complex to facilitate peptidyl transfer during CAT tailing step. The protein is Eukaryotic translation initiation factor 5A-1 of Solanum lycopersicum (Tomato).